A 180-amino-acid chain; its full sequence is Translation initiation factor IF-3 (180 aa).

It belongs to the IF-3 family. In terms of assembly, monomer.

It localises to the cytoplasm. IF-3 binds to the 30S ribosomal subunit and shifts the equilibrium between 70S ribosomes and their 50S and 30S subunits in favor of the free subunits, thus enhancing the availability of 30S subunits on which protein synthesis initiation begins. This chain is Translation initiation factor IF-3, found in Caldanaerobacter subterraneus subsp. tengcongensis (strain DSM 15242 / JCM 11007 / NBRC 100824 / MB4) (Thermoanaerobacter tengcongensis).